The sequence spans 373 residues: MKFIDEARIEVIAGDGGDGSASMRREKFVPFGGPDGGDGGRGGSVIAVADRNINTLIDYRYAKKHLARNGENGRGADCYGKGGDDITLRMPVGTTITDMETGELIADLTEHNQSVQIAQGGAGGLGNLHFKSSTNRAPRQKTDGKPGERRMVRLELKVLADVGLLGMPNAGKSTFIASVSNAKPKIADYPFTTLAPNLGVVRVGPSRSFVIADIPGLIEGAAEGAGLGHQFLRHLQRTGLLLHIVDLAPFDDAVDPVAEAKAIVNELRKYDELLYEKPRWLVLNKLDMVPEDEREARVSAFLEGFGWDGPVFEISALTGQGCENLCYAVFDHISAHSDAQRAAEAEDLAADVRFREKPQAPAAADDAGTDPQV.

Positions 1-159 (MKFIDEARIE…RMVRLELKVL (159 aa)) constitute an Obg domain. Positions 128–147 (LHFKSSTNRAPRQKTDGKPG) are disordered. Residues 160–334 (ADVGLLGMPN…LCYAVFDHIS (175 aa)) enclose the OBG-type G domain. Residues 166–173 (GMPNAGKS), 191–195 (FTTLA), 213–216 (DIPG), 284–287 (NKLD), and 315–317 (SAL) contribute to the GTP site. Mg(2+) is bound by residues S173 and T193. Residues 354 to 373 (FREKPQAPAAADDAGTDPQV) form a disordered region. Over residues 359-373 (QAPAAADDAGTDPQV) the composition is skewed to low complexity.

The protein belongs to the TRAFAC class OBG-HflX-like GTPase superfamily. OBG GTPase family. As to quaternary structure, monomer. Requires Mg(2+) as cofactor.

Its subcellular location is the cytoplasm. Functionally, an essential GTPase which binds GTP, GDP and possibly (p)ppGpp with moderate affinity, with high nucleotide exchange rates and a fairly low GTP hydrolysis rate. Plays a role in control of the cell cycle, stress response, ribosome biogenesis and in those bacteria that undergo differentiation, in morphogenesis control. This chain is GTPase Obg, found in Paraburkholderia phytofirmans (strain DSM 17436 / LMG 22146 / PsJN) (Burkholderia phytofirmans).